The chain runs to 166 residues: Small ribosomal subunit protein uS5 (166 aa).

Positions 11–74 constitute an S5 DRBM domain; the sequence is LVEKLVAVDR…EAARRNMITV (64 aa).

Belongs to the universal ribosomal protein uS5 family. In terms of assembly, part of the 30S ribosomal subunit. Contacts proteins S4 and S8.

Its function is as follows. With S4 and S12 plays an important role in translational accuracy. Located at the back of the 30S subunit body where it stabilizes the conformation of the head with respect to the body. In Acinetobacter baumannii (strain ATCC 17978 / DSM 105126 / CIP 53.77 / LMG 1025 / NCDC KC755 / 5377), this protein is Small ribosomal subunit protein uS5.